The primary structure comprises 145 residues: uncharacterized protein (145 aa).

This sequence belongs to the SAP18 family.

It localises to the cytoplasm. The protein resides in the nucleus. This is an uncharacterized protein from Schizosaccharomyces pombe (strain 972 / ATCC 24843) (Fission yeast).